A 367-amino-acid chain; its full sequence is Fructose-1,6-bisphosphatase class 1 3 (367 aa).

It belongs to the FBPase class 1 family. As to quaternary structure, homotetramer.

The protein resides in the cytoplasm. It carries out the reaction beta-D-fructose 1,6-bisphosphate + H2O = beta-D-fructose 6-phosphate + phosphate. The protein operates within carbohydrate biosynthesis; gluconeogenesis. The polypeptide is Fructose-1,6-bisphosphatase class 1 3 (Paraburkholderia phymatum (strain DSM 17167 / CIP 108236 / LMG 21445 / STM815) (Burkholderia phymatum)).